The primary structure comprises 293 residues: Ankyrin repeat and SOCS box protein 11 (293 aa).

ANK repeat units lie at residues 36 to 65 (DDRTPLHDAALQGRLLPLRRLLSQGYNVGM), 69 to 98 (DGITALHEACVGGHFTCAKLLLEHGADANA), 102 to 131 (DGATPLFSACCSGNPALVSLILTHSSAHHP), 134 to 163 (LLCSPLHEAAKRGHTACVELLLSHGVNVDM), 167 to 196 (SVGTALYCACEVKSTDCVLTLLILGADVQC), 199 to 228 (GLDTPLHAACRVGGAKEAELLLEHGADRTS), and 232 to 259 (EGKTPLDLTSDQSIKHLLQTAGTCSLSQ). The SOCS box domain occupies 244 to 293 (SIKHLLQTAGTCSLSQLCRWCIRRSLGQKGLNKTKTLCLPHMLHNYLLYH).

The protein belongs to the ankyrin SOCS box (ASB) family. In terms of assembly, substrate-recognition component of the ECS(ASB11) complex, composed of asb11, cul5, elob, eloc and rnf7/rbx2. As to expression, expressed in the developing nervous system: localizes to neural plate margins and is abutting the proneuronal zone.

The protein localises to the endoplasmic reticulum. It functions in the pathway protein modification; protein ubiquitination. Substrate-recognition component of a cullin-5-RING E3 ubiquitin-protein ligase complex (ECS complex, also named CRL5 complex), which mediates the ubiquitination and subsequent proteasomal degradation of target proteins. Acts as a regulator of the neuronal progenitor compartment size by maintaining the neural precursors in the proliferating undifferentiated state. The ECS(ASB11) complex acts as a positive regulator of Notch signaling pathway by mediating ubiquitination and degradation of DeltaA (dla). Also acts as a regulator of regenerative myogenesis. This chain is Ankyrin repeat and SOCS box protein 11, found in Danio rerio (Zebrafish).